A 241-amino-acid chain; its full sequence is Probable cobalt-factor III C(17)-methyltransferase (241 aa).

Belongs to the precorrin methyltransferase family.

The enzyme catalyses Co(II)-factor III + S-adenosyl-L-methionine + H(+) = Co(II)-factor IV + S-adenosyl-L-homocysteine. Its pathway is cofactor biosynthesis; adenosylcobalamin biosynthesis; cob(II)yrinate a,c-diamide from sirohydrochlorin (anaerobic route): step 3/10. Functionally, methyltransferase that likely catalyzes the ring contraction and methylation of C-17 in cobalt-factor III to form cobalt-factor IV. May also convert cobalt-precorrin-3 to cobalt-precorrin-4. The chain is Probable cobalt-factor III C(17)-methyltransferase (cbiH) from Salmonella typhimurium (strain LT2 / SGSC1412 / ATCC 700720).